A 232-amino-acid chain; its full sequence is Caffeoyl-CoA O-methyltransferase (232 aa).

Residue Lys-6 participates in substrate binding. Residues Thr-48, Glu-70, 72–73 (GV), Ser-78, Asp-96, and Ala-125 contribute to the S-adenosyl-L-methionine site. Asp-148 lines the substrate pocket. Asp-148 contacts a divalent metal cation. Residue Asp-150 coordinates S-adenosyl-L-methionine. A divalent metal cation-binding residues include Asp-174 and Asn-175. Asn-179 serves as a coordination point for substrate.

Belongs to the class I-like SAM-binding methyltransferase superfamily. Cation-dependent O-methyltransferase family. CCoAMT subfamily. Requires a divalent metal cation as cofactor.

It carries out the reaction (E)-caffeoyl-CoA + S-adenosyl-L-methionine = (E)-feruloyl-CoA + S-adenosyl-L-homocysteine + H(+). Its pathway is aromatic compound metabolism; phenylpropanoid biosynthesis. Its function is as follows. Methylates caffeoyl-CoA to feruloyl-CoA and 5-hydroxyferuloyl-CoA to sinapoyl-CoA. Plays a role in the synthesis of feruloylated polysaccharides. Involved in the reinforcement of the plant cell wall. Also involved in the responding to wounding or pathogen challenge by the increased formation of cell wall-bound ferulic acid polymers. In Citrus natsudaidai (Natsudaidai orange), this protein is Caffeoyl-CoA O-methyltransferase.